We begin with the raw amino-acid sequence, 153 residues long: Endoribonuclease YbeY (153 aa).

Residues His116, His120, and His126 each contribute to the Zn(2+) site.

Belongs to the endoribonuclease YbeY family. The cofactor is Zn(2+).

Its subcellular location is the cytoplasm. Functionally, single strand-specific metallo-endoribonuclease involved in late-stage 70S ribosome quality control and in maturation of the 3' terminus of the 16S rRNA. The polypeptide is Endoribonuclease YbeY (Leifsonia xyli subsp. xyli (strain CTCB07)).